Consider the following 366-residue polypeptide: Adenosine deaminase (366 aa).

Positions 19 and 21 each coordinate Zn(2+). His21, Asp23, and Gly181 together coordinate substrate. His208 provides a ligand contact to Zn(2+). Residue Glu211 is the Proton donor of the active site. Position 304 (Asp304) interacts with Zn(2+).

The protein belongs to the metallo-dependent hydrolases superfamily. Adenosine and AMP deaminases family. Adenosine deaminase subfamily. Zn(2+) is required as a cofactor.

The enzyme catalyses adenosine + H2O + H(+) = inosine + NH4(+). It carries out the reaction 2'-deoxyadenosine + H2O + H(+) = 2'-deoxyinosine + NH4(+). Catalyzes the hydrolytic deamination of adenosine and 2-deoxyadenosine. The chain is Adenosine deaminase from Mycobacterium avium (strain 104).